The sequence spans 179 residues: Replication restart protein DnaT (179 aa).

The tract at residues 156–179 (GGLPKRDVNTVSEPDSQIPPGFRG) is disordered.

This sequence belongs to the DnaT family. In terms of assembly, homooligomerizes. Interacts with PriB. Component of the replication restart primosome. Primosome assembly occurs via a 'hand-off' mechanism. PriA binds to replication forks, subsequently PriB then DnaT bind; DnaT then displaces ssDNA to generate the helicase loading substrate.

In terms of biological role, involved in the restart of stalled replication forks, which reloads the replicative helicase on sites other than the origin of replication. Can function in multiple replication restart pathways. Displaces ssDNA from a PriB-ssDNA complex. Probably forms a spiral filament on ssDNA. The sequence is that of Replication restart protein DnaT from Escherichia coli O17:K52:H18 (strain UMN026 / ExPEC).